Here is an 838-residue protein sequence, read N- to C-terminus: Xyloglucanase (838 aa).

An N-terminal signal peptide occupies residues 1-19 (MKVSRVLALVLGAVIPAHA). Residue Asp-53 is the Nucleophile of the active site. Asn-232 and Asn-436 each carry an N-linked (GlcNAc...) asparagine glycan. Catalysis depends on Asp-469, which acts as the Proton donor. The interval 750–801 (GTGGTSSSTKQSSSSTSSASSSTTLRSSVVSTTRASTVTSSRTSSAAGPTGS) is disordered. Positions 754–797 (TSSSTKQSSSSTSSASSSTTLRSSVVSTTRASTVTSSRTSSAAG) are enriched in low complexity. The CBM1 domain maps to 802–838 (GVAGHYAQCGGIGWTGPTQCVAPYVCQKQNDYYYQCV).

It belongs to the glycosyl hydrolase 74 family.

It carries out the reaction Hydrolysis of (1-&gt;4)-D-glucosidic linkages in xyloglucans so as to successively remove oligosaccharides from the newly-formed chain end after endo-initiation on a polymer molecule.. In terms of biological role, hydrolyzes the glucosidic bonds of unbranched Glc residues in tamarind seed xyloglucan, producing XXXG, XLXG, XXLG and XLLG. Has a low activity against beta-glucan and carboxymethylcellulose. Not active against Avicel, laminarin, xylan, galactomannan, linear and branched arabinans, galactan, polygalacturonic acid, starch, beta-D-Glcp, beta-D-cellobiose, beta-D-Galp, beta-D-Xylp, alpha-D-Xylp, alpha-L-Araf and alpha-L-Arap. This chain is Xyloglucanase, found in Hypocrea jecorina (strain QM6a) (Trichoderma reesei).